Reading from the N-terminus, the 1167-residue chain is RNA-directed RNA polymerase (1167 aa).

The RdRp catalytic domain occupies 553–735; that stretch reads LTYGILAEAT…KALASYTGLE (183 aa).

Belongs to the reoviridae RNA-directed RNA polymerase family. As to quaternary structure, interacts with VP3 (Potential). Interacts with VP2 (Potential). Interacts with NSP5; this interaction is probably necessary for the formation of functional virus factories.

The protein resides in the virion. It catalyses the reaction RNA(n) + a ribonucleoside 5'-triphosphate = RNA(n+1) + diphosphate. In terms of biological role, RNA-directed RNA polymerase that is involved in both transcription and genome replication. Together with VP3 capping enzyme, forms an enzyme complex positioned near the channels situated at each of the five-fold vertices of the core. Following infection, the outermost layer of the virus is lost, leaving a double-layered particle (DLP) made up of the core and VP6 shell. VP1 then catalyzes the transcription of fully conservative plus-strand genomic RNAs that are extruded through the DLP's channels into the cytoplasm where they function as mRNAs for translation of viral proteins. One copy of each of the viral (+)RNAs is also recruited during core assembly, together with newly synthesized polymerase complexes and VP2. The polymerase of these novo-formed particles catalyzes the synthesis of complementary minus-strands leading to dsDNA formation. To do so, the polymerase specifically recognizes conserved 3' sequence(s) in plus-strand RNA templates. Once dsRNA synthesis is complete, the polymerase switches to the transcriptional mode, thus providing secondary transcription. The polypeptide is RNA-directed RNA polymerase (Rotavirus X (isolate RVX/Human/Bangladesh/NADRV-B219/2002/GXP[X]) (RV ADRV-N)).